The primary structure comprises 738 residues: Outer membrane protein assembly factor BamA (738 aa).

Positions 1-13 (MVWLLFLSSFCFA) are cleaved as a signal peptide. 5 consecutive POTRA domains span residues 14–81 (DEVV…LQEN), 82–159 (PILR…VKEA), 162–248 (TVIR…LKEG), 251–329 (YSFG…VVST), and 332–404 (YRIR…VKER).

The protein belongs to the BamA family. Part of the Bam complex.

It is found in the cell outer membrane. Functionally, part of the outer membrane protein assembly complex, which is involved in assembly and insertion of beta-barrel proteins into the outer membrane. In Neorickettsia risticii (strain Illinois), this protein is Outer membrane protein assembly factor BamA.